The primary structure comprises 126 residues: Aspartate 1-decarboxylase (126 aa).

S25 (schiff-base intermediate with substrate; via pyruvic acid) is an active-site residue. Position 25 is a pyruvic acid (Ser) (S25). Substrate is bound at residue T57. Y58 (proton donor) is an active-site residue. 73–75 (GAA) contributes to the substrate binding site.

This sequence belongs to the PanD family. In terms of assembly, heterooctamer of four alpha and four beta subunits. Pyruvate is required as a cofactor. In terms of processing, is synthesized initially as an inactive proenzyme, which is activated by self-cleavage at a specific serine bond to produce a beta-subunit with a hydroxyl group at its C-terminus and an alpha-subunit with a pyruvoyl group at its N-terminus.

Its subcellular location is the cytoplasm. It catalyses the reaction L-aspartate + H(+) = beta-alanine + CO2. It participates in cofactor biosynthesis; (R)-pantothenate biosynthesis; beta-alanine from L-aspartate: step 1/1. Functionally, catalyzes the pyruvoyl-dependent decarboxylation of aspartate to produce beta-alanine. The sequence is that of Aspartate 1-decarboxylase from Sodalis glossinidius (strain morsitans).